We begin with the raw amino-acid sequence, 256 residues long: 5-keto-4-deoxy-D-glucarate aldolase (256 aa).

Catalysis depends on His-50, which acts as the Proton acceptor. Residue Gln-151 coordinates substrate. Glu-153 is a binding site for Mg(2+). The substrate site is built by Ser-178 and Asp-179. Residue Asp-179 participates in Mg(2+) binding.

This sequence belongs to the HpcH/HpaI aldolase family. KDGluc aldolase subfamily. Homohexamer; trimer of dimers. Mg(2+) serves as cofactor.

It catalyses the reaction 5-dehydro-4-deoxy-D-glucarate = 2-hydroxy-3-oxopropanoate + pyruvate. The catalysed reaction is 2-dehydro-3-deoxy-D-glucarate = 2-hydroxy-3-oxopropanoate + pyruvate. The protein operates within carbohydrate acid metabolism; galactarate degradation; D-glycerate from galactarate: step 2/3. In terms of biological role, catalyzes the reversible retro-aldol cleavage of both 5-keto-4-deoxy-D-glucarate and 2-keto-3-deoxy-D-glucarate to pyruvate and tartronic semialdehyde. The sequence is that of 5-keto-4-deoxy-D-glucarate aldolase from Escherichia coli (strain ATCC 8739 / DSM 1576 / NBRC 3972 / NCIMB 8545 / WDCM 00012 / Crooks).